A 526-amino-acid polypeptide reads, in one-letter code: Probable metalloreductase AIM14 (526 aa).

7 consecutive transmembrane segments (helical) span residues 17-37 (IPYG…LGVL), 60-80 (LYLV…LLPF), 96-113 (RLGR…LLNL), 138-158 (CIII…ALGE), 172-192 (LAGV…IGPM), 199-219 (AFYV…AFHA), and 221-241 (PSVT…QGFA). The region spanning 97 to 214 (LGRLSYALLP…NLTGISFIFV (118 aa)) is the Ferric oxidoreductase domain. An FAD-binding FR-type domain is found at 238–370 (QGFAKFYYAK…GGSGISFGLP (133 aa)).

Belongs to the ferric reductase (FRE) family. AIM14 subfamily.

It is found in the membrane. Probable cell surface metalloreductase. May be involved in iron or copper homeostasis. This is Probable metalloreductase AIM14 (AIM14) from Zygosaccharomyces rouxii (strain ATCC 2623 / CBS 732 / NBRC 1130 / NCYC 568 / NRRL Y-229).